A 170-amino-acid polypeptide reads, in one-letter code: Dual-action ribosomal maturation protein DarP (170 aa).

This sequence belongs to the DarP family.

The protein resides in the cytoplasm. In terms of biological role, member of a network of 50S ribosomal subunit biogenesis factors which assembles along the 30S-50S interface, preventing incorrect 23S rRNA structures from forming. Promotes peptidyl transferase center (PTC) maturation. The polypeptide is Dual-action ribosomal maturation protein DarP (Neisseria meningitidis serogroup A / serotype 4A (strain DSM 15465 / Z2491)).